A 780-amino-acid polypeptide reads, in one-letter code: Mediator of RNA polymerase II transcription subunit 15 (780 aa).

Residues 1–124 (MSEEDWPSPK…PQPTSAQARN (124 aa)) form an interaction with nhr-49 region. Residues 2-96 (SEEDWPSPKF…SPPCTTAALL (95 aa)) form an interaction with sbp-1 region. 3 disordered regions span residues 91-152 (TTAA…APSA), 166-363 (PSPD…QGMM), and 564-597 (GPGP…GTPN). Positions 125-139 (PPVTVATTQASTTPS) are enriched in low complexity. The span at 225–245 (PPNGYGGYGMMNGPPGSGAPM) shows a compositional bias: gly residues. Residues 296–316 (QGATPTGPSSVLESLINQPQQ) are compositionally biased toward polar residues. 2 stretches are compositionally biased toward low complexity: residues 333–353 (AAQR…QQQR) and 574–594 (SMSG…NPMG).

This sequence belongs to the Mediator complex subunit 15 family. Component of the Mediator complex. Interacts with nhr-49, nhr-64 and sbp-1. As to expression, expressed in the intestine and head neurons.

The protein resides in the nucleus. Functionally, component of the Mediator complex, a coactivator involved in regulated gene transcription of nearly all RNA polymerase II-dependent genes. Mediator functions as a bridge to convey information from gene-specific regulatory proteins to the basal RNA polymerase II transcription machinery. Mediator is recruited to promoters by direct interactions with regulatory proteins and serves as a scaffold for the assembly of a functional preinitiation complex with RNA polymerase II and the general transcription factors. Required for regulated expression of genes controlling fatty acid desaturation by transcription factors including sbp-1 and nhr-49. Involved in the response to simulated microgravity, in concert with sbp-1, probably acting in the intestine. This is Mediator of RNA polymerase II transcription subunit 15 (mdt-15) from Caenorhabditis elegans.